The chain runs to 307 residues: 4-hydroxy-tetrahydrodipicolinate synthase (307 aa).

S57 provides a ligand contact to pyruvate. Residue Y145 is the Proton donor/acceptor of the active site. K173 functions as the Schiff-base intermediate with substrate in the catalytic mechanism. Pyruvate is bound at residue I219.

The protein belongs to the DapA family. As to quaternary structure, homotetramer; dimer of dimers.

Its subcellular location is the cytoplasm. It carries out the reaction L-aspartate 4-semialdehyde + pyruvate = (2S,4S)-4-hydroxy-2,3,4,5-tetrahydrodipicolinate + H2O + H(+). It participates in amino-acid biosynthesis; L-lysine biosynthesis via DAP pathway; (S)-tetrahydrodipicolinate from L-aspartate: step 3/4. In terms of biological role, catalyzes the condensation of (S)-aspartate-beta-semialdehyde [(S)-ASA] and pyruvate to 4-hydroxy-tetrahydrodipicolinate (HTPA). This is 4-hydroxy-tetrahydrodipicolinate synthase from Polynucleobacter asymbioticus (strain DSM 18221 / CIP 109841 / QLW-P1DMWA-1) (Polynucleobacter necessarius subsp. asymbioticus).